The chain runs to 812 residues: DNA gyrase subunit A (812 aa).

Residues 31–496 (IPDVRDGLKP…GNTDFNVEDV (466 aa)) form the Topo IIA-type catalytic domain. The active-site O-(5'-phospho-DNA)-tyrosine intermediate is Tyr-119. The GyrA-box signature appears at 523–529 (QGRGGKG).

The protein belongs to the type II topoisomerase GyrA/ParC subunit family. In terms of assembly, heterotetramer, composed of two GyrA and two GyrB chains. In the heterotetramer, GyrA contains the active site tyrosine that forms a transient covalent intermediate with DNA, while GyrB binds cofactors and catalyzes ATP hydrolysis.

The protein resides in the cytoplasm. The catalysed reaction is ATP-dependent breakage, passage and rejoining of double-stranded DNA.. In terms of biological role, a type II topoisomerase that negatively supercoils closed circular double-stranded (ds) DNA in an ATP-dependent manner to modulate DNA topology and maintain chromosomes in an underwound state. Negative supercoiling favors strand separation, and DNA replication, transcription, recombination and repair, all of which involve strand separation. Also able to catalyze the interconversion of other topological isomers of dsDNA rings, including catenanes and knotted rings. Type II topoisomerases break and join 2 DNA strands simultaneously in an ATP-dependent manner. The protein is DNA gyrase subunit A of Kosmotoga olearia (strain ATCC BAA-1733 / DSM 21960 / TBF 19.5.1).